The sequence spans 306 residues: tRNA-cytidine(32) 2-sulfurtransferase (306 aa).

A PP-loop motif motif is present at residues 49–54 (SGGKDS). C124, C127, and C215 together coordinate [4Fe-4S] cluster.

Belongs to the TtcA family. Homodimer. The cofactor is Mg(2+). It depends on [4Fe-4S] cluster as a cofactor.

It is found in the cytoplasm. It catalyses the reaction cytidine(32) in tRNA + S-sulfanyl-L-cysteinyl-[cysteine desulfurase] + AH2 + ATP = 2-thiocytidine(32) in tRNA + L-cysteinyl-[cysteine desulfurase] + A + AMP + diphosphate + H(+). It participates in tRNA modification. Functionally, catalyzes the ATP-dependent 2-thiolation of cytidine in position 32 of tRNA, to form 2-thiocytidine (s(2)C32). The sulfur atoms are provided by the cysteine/cysteine desulfurase (IscS) system. The polypeptide is tRNA-cytidine(32) 2-sulfurtransferase (Azoarcus sp. (strain BH72)).